Reading from the N-terminus, the 248-residue chain is Transcription factor Spi-C (248 aa).

The segment at residues 111 to 194 (LRLFEYLHES…IRRKLTYQFS (84 aa)) is a DNA-binding region (ETS).

The protein belongs to the ETS family. In terms of assembly, binds DNA as a monomer.

The protein localises to the nucleus. Functionally, controls the development of red pulp macrophages required for red blood cells recycling and iron homeostasis. Transcription factor that binds to the PU-box, a purine-rich DNA sequence (5'-GAGGA[AT]-3') that can act as a lymphoid-specific enhancer. Regulates VCAM1 gene expression. In Bos taurus (Bovine), this protein is Transcription factor Spi-C (SPIC).